We begin with the raw amino-acid sequence, 195 residues long: Transmembrane protein 239 (195 aa).

A run of 2 helical transmembrane segments spans residues 105–125 (LWGL…HALF) and 145–171 (HLLP…LLLF).

Its subcellular location is the membrane. The polypeptide is Transmembrane protein 239 (TMEM239) (Homo sapiens (Human)).